The following is a 154-amino-acid chain: Peptide deformylase (154 aa).

Residues C90 and H132 each contribute to the Fe cation site. The active site involves E133. Residue H136 coordinates Fe cation.

Belongs to the polypeptide deformylase family. Fe(2+) serves as cofactor.

The catalysed reaction is N-terminal N-formyl-L-methionyl-[peptide] + H2O = N-terminal L-methionyl-[peptide] + formate. Its function is as follows. Removes the formyl group from the N-terminal Met of newly synthesized proteins. Requires at least a dipeptide for an efficient rate of reaction. N-terminal L-methionine is a prerequisite for activity but the enzyme has broad specificity at other positions. The chain is Peptide deformylase from Halothermothrix orenii (strain H 168 / OCM 544 / DSM 9562).